The following is a 374-amino-acid chain: Protein RecA (374 aa).

66–73 contacts ATP; sequence GPESSGKT. Positions 326 to 374 are disordered; that stretch reads KLGVGVHPEESATEPGADAASAAPADAAPAVPAPTTAKATKSKATAAKS. Over residues 338 to 374 the composition is skewed to low complexity; the sequence is TEPGADAASAAPADAAPAVPAPTTAKATKSKATAAKS.

The protein belongs to the RecA family.

It localises to the cytoplasm. Functionally, can catalyze the hydrolysis of ATP in the presence of single-stranded DNA, the ATP-dependent uptake of single-stranded DNA by duplex DNA, and the ATP-dependent hybridization of homologous single-stranded DNAs. It interacts with LexA causing its activation and leading to its autocatalytic cleavage. In Streptomyces coelicolor (strain ATCC BAA-471 / A3(2) / M145), this protein is Protein RecA.